The primary structure comprises 136 residues: Nuclear receptor 2C2-associated protein (136 aa).

This sequence belongs to the NR2C2AP family.

Its subcellular location is the nucleus. Its function is as follows. May act as a repressor of nr2c2-mediated transactivation by suppressing the binding between nr2c2 and its response element in target genes. The chain is Nuclear receptor 2C2-associated protein (nr2c2ap) from Xenopus laevis (African clawed frog).